The primary structure comprises 646 residues: Threonine--tRNA ligase (646 aa).

Positions 1 to 61 (MIKITFPDGN…NEDSNFEIVT (61 aa)) constitute a TGS domain. The tract at residues 242 to 540 (DHRKLGRELD…LIEVYKGAFP (299 aa)) is catalytic. Zn(2+) contacts are provided by C336, H387, and H517.

Belongs to the class-II aminoacyl-tRNA synthetase family. In terms of assembly, homodimer. Zn(2+) serves as cofactor.

The protein localises to the cytoplasm. The catalysed reaction is tRNA(Thr) + L-threonine + ATP = L-threonyl-tRNA(Thr) + AMP + diphosphate + H(+). Catalyzes the attachment of threonine to tRNA(Thr) in a two-step reaction: L-threonine is first activated by ATP to form Thr-AMP and then transferred to the acceptor end of tRNA(Thr). Also edits incorrectly charged L-seryl-tRNA(Thr). This is Threonine--tRNA ligase from Lactococcus lactis subsp. lactis (strain IL1403) (Streptococcus lactis).